Here is a 224-residue protein sequence, read N- to C-terminus: Orotidine 5'-phosphate decarboxylase (224 aa).

Residues aspartate 10, lysine 32, 59 to 68 (DLKLHDIPNT), threonine 115, arginine 175, glutamine 184, glycine 204, and arginine 205 each bind substrate. Lysine 61 functions as the Proton donor in the catalytic mechanism.

It belongs to the OMP decarboxylase family. Type 1 subfamily. As to quaternary structure, homodimer.

It carries out the reaction orotidine 5'-phosphate + H(+) = UMP + CO2. It functions in the pathway pyrimidine metabolism; UMP biosynthesis via de novo pathway; UMP from orotate: step 2/2. In terms of biological role, catalyzes the decarboxylation of orotidine 5'-monophosphate (OMP) to uridine 5'-monophosphate (UMP). The polypeptide is Orotidine 5'-phosphate decarboxylase (Novosphingobium aromaticivorans (strain ATCC 700278 / DSM 12444 / CCUG 56034 / CIP 105152 / NBRC 16084 / F199)).